The primary structure comprises 218 residues: Non-structural protein NP-1 (218 aa).

2 disordered regions span residues M1–P89 and T195–N218. Composition is skewed to basic residues over residues D8 to S18 and P27 to I40. Over residues S58–K67 the composition is skewed to polar residues. Residues T73–R86 are compositionally biased toward basic and acidic residues. The span at E196 to M205 shows a compositional bias: acidic residues.

The protein belongs to the Bocaparvovirus Non-structural protein NP-1 family.

The protein resides in the host nucleus. Required for the expression of the capsid proteins. Performs the splicing and internal polyadenylation of the viral capsid-encoding mRNA precursor, which allows its maturation and expression. Transactivates the viral promoter. This is Non-structural protein NP-1 (NP1) from Human bocavirus 3 (HBoV3).